A 419-amino-acid chain; its full sequence is UDP-N-acetylglucosamine 1-carboxyvinyltransferase (419 aa).

K22 to N23 provides a ligand contact to phosphoenolpyruvate. R91 contributes to the UDP-N-acetyl-alpha-D-glucosamine binding site. The active-site Proton donor is the C115. C115 bears the 2-(S-cysteinyl)pyruvic acid O-phosphothioketal mark. UDP-N-acetyl-alpha-D-glucosamine contacts are provided by residues R120–L124, K160–V163, D305, and I327.

This sequence belongs to the EPSP synthase family. MurA subfamily.

It is found in the cytoplasm. The enzyme catalyses phosphoenolpyruvate + UDP-N-acetyl-alpha-D-glucosamine = UDP-N-acetyl-3-O-(1-carboxyvinyl)-alpha-D-glucosamine + phosphate. Its pathway is cell wall biogenesis; peptidoglycan biosynthesis. In terms of biological role, cell wall formation. Adds enolpyruvyl to UDP-N-acetylglucosamine. In Citrobacter koseri (strain ATCC BAA-895 / CDC 4225-83 / SGSC4696), this protein is UDP-N-acetylglucosamine 1-carboxyvinyltransferase.